We begin with the raw amino-acid sequence, 246 residues long: 4-hydroxy-tetrahydrodipicolinate reductase (246 aa).

NAD(+) is bound at residue 7 to 12; sequence GCSGRM. R34 is an NADP(+) binding site. NAD(+) contacts are provided by residues 76–78 and 102–105; these read ATT and CPNT. H135 acts as the Proton donor/acceptor in catalysis. H136 contributes to the (S)-2,3,4,5-tetrahydrodipicolinate binding site. K139 serves as the catalytic Proton donor. (S)-2,3,4,5-tetrahydrodipicolinate is bound at residue 145–146; the sequence is GT.

Belongs to the DapB family.

The protein localises to the cytoplasm. The catalysed reaction is (S)-2,3,4,5-tetrahydrodipicolinate + NAD(+) + H2O = (2S,4S)-4-hydroxy-2,3,4,5-tetrahydrodipicolinate + NADH + H(+). The enzyme catalyses (S)-2,3,4,5-tetrahydrodipicolinate + NADP(+) + H2O = (2S,4S)-4-hydroxy-2,3,4,5-tetrahydrodipicolinate + NADPH + H(+). Its pathway is amino-acid biosynthesis; L-lysine biosynthesis via DAP pathway; (S)-tetrahydrodipicolinate from L-aspartate: step 4/4. Catalyzes the conversion of 4-hydroxy-tetrahydrodipicolinate (HTPA) to tetrahydrodipicolinate. The protein is 4-hydroxy-tetrahydrodipicolinate reductase of Chlamydia abortus (strain DSM 27085 / S26/3) (Chlamydophila abortus).